A 308-amino-acid chain; its full sequence is tRNA pseudouridine synthase B (308 aa).

Asp47 acts as the Nucleophile in catalysis.

The protein belongs to the pseudouridine synthase TruB family. Type 1 subfamily.

The catalysed reaction is uridine(55) in tRNA = pseudouridine(55) in tRNA. In terms of biological role, responsible for synthesis of pseudouridine from uracil-55 in the psi GC loop of transfer RNAs. The protein is tRNA pseudouridine synthase B of Xanthomonas campestris pv. campestris (strain B100).